The sequence spans 540 residues: Chaperonin GroEL (540 aa).

ATP-binding positions include 29–32, 86–90, G413, 476–478, and D492; these read TLGP, DGTTT, and NAA.

The protein belongs to the chaperonin (HSP60) family. As to quaternary structure, forms a cylinder of 14 subunits composed of two heptameric rings stacked back-to-back. Interacts with the co-chaperonin GroES.

It is found in the cytoplasm. The catalysed reaction is ATP + H2O + a folded polypeptide = ADP + phosphate + an unfolded polypeptide.. Together with its co-chaperonin GroES, plays an essential role in assisting protein folding. The GroEL-GroES system forms a nano-cage that allows encapsulation of the non-native substrate proteins and provides a physical environment optimized to promote and accelerate protein folding. This chain is Chaperonin GroEL, found in Streptococcus agalactiae serotype V (strain ATCC BAA-611 / 2603 V/R).